The primary structure comprises 352 residues: Photosystem II D2 protein (352 aa).

A helical transmembrane segment spans residues 40–60 (CAYLAVGAWFTGTTFVTSWYT). His-117 lines the chlorophyll a pocket. A helical transmembrane segment spans residues 124–140 (GFTLRQFEIARLIGLRP). Pheophytin a contacts are provided by Gln-129 and Asn-142. The helical transmembrane segment at 152–165 (VFVSVFLLYPLGQA) threads the bilayer. His-197 serves as a coordination point for chlorophyll a. A helical membrane pass occupies residues 207–227 (AALLCAIHGATVENTLFEDGD). A plastoquinone contacts are provided by His-214 and Phe-261. His-214 contributes to the Fe cation binding site. His-268 is a Fe cation binding site. A helical membrane pass occupies residues 278-294 (GLWMSAIGVVGLGVNLR).

The protein belongs to the reaction center PufL/M/PsbA/D family. In terms of assembly, PSII is composed of 1 copy each of membrane proteins PsbA, PsbB, PsbC, PsbD, PsbE, PsbF, PsbH, PsbI, PsbJ, PsbK, PsbL, PsbM, PsbT, PsbX, PsbY, PsbZ, Psb30/Ycf12, at least 3 peripheral proteins of the oxygen-evolving complex and a large number of cofactors. It forms dimeric complexes. It depends on The D1/D2 heterodimer binds P680, chlorophylls that are the primary electron donor of PSII, and subsequent electron acceptors. It shares a non-heme iron and each subunit binds pheophytin, quinone, additional chlorophylls, carotenoids and lipids. There is also a Cl(-1) ion associated with D1 and D2, which is required for oxygen evolution. The PSII complex binds additional chlorophylls, carotenoids and specific lipids. as a cofactor.

Its subcellular location is the plastid. The protein resides in the cyanelle thylakoid membrane. It catalyses the reaction 2 a plastoquinone + 4 hnu + 2 H2O = 2 a plastoquinol + O2. Photosystem II (PSII) is a light-driven water:plastoquinone oxidoreductase that uses light energy to abstract electrons from H(2)O, generating O(2) and a proton gradient subsequently used for ATP formation. It consists of a core antenna complex that captures photons, and an electron transfer chain that converts photonic excitation into a charge separation. The D1/D2 (PsbA/PsbD) reaction center heterodimer binds P680, the primary electron donor of PSII as well as several subsequent electron acceptors. D2 is needed for assembly of a stable PSII complex. This chain is Photosystem II D2 protein, found in Cyanophora paradoxa.